The following is a 428-amino-acid chain: Small ribosomal subunit protein uS2m (428 aa).

Residues 30–50 are disordered; it reads FLSQDNFTAPPPPPTNSKKQA.

This sequence belongs to the universal ribosomal protein uS2 family. As to quaternary structure, component of the mitochondrial small ribosomal subunit (mt-SSU). Mature N.crassa 74S mitochondrial ribosomes consist of a small (37S) and a large (54S) subunit. The 37S small subunit contains a 16S ribosomal RNA (16S mt-rRNA) and 32 different proteins. The 54S large subunit contains a 23S rRNA (23S mt-rRNA) and 42 different proteins.

The protein resides in the mitochondrion. Functionally, component of the mitochondrial ribosome (mitoribosome), a dedicated translation machinery responsible for the synthesis of mitochondrial genome-encoded proteins, including at least some of the essential transmembrane subunits of the mitochondrial respiratory chain. The mitoribosomes are attached to the mitochondrial inner membrane and translation products are cotranslationally integrated into the membrane. The sequence is that of Small ribosomal subunit protein uS2m (mrp4) from Neurospora crassa (strain ATCC 24698 / 74-OR23-1A / CBS 708.71 / DSM 1257 / FGSC 987).